Here is a 505-residue protein sequence, read N- to C-terminus: Glutamate--tRNA ligase (505 aa).

The 'HIGH' region signature appears at 11–21 (PSPTGPLHIGG). A 'KMSKS' region motif is present at residues 260 to 264 (KLSKR). Lys263 provides a ligand contact to ATP.

It belongs to the class-I aminoacyl-tRNA synthetase family. Glutamate--tRNA ligase type 1 subfamily. As to quaternary structure, monomer.

It is found in the cytoplasm. It carries out the reaction tRNA(Glu) + L-glutamate + ATP = L-glutamyl-tRNA(Glu) + AMP + diphosphate. Its function is as follows. Catalyzes the attachment of glutamate to tRNA(Glu) in a two-step reaction: glutamate is first activated by ATP to form Glu-AMP and then transferred to the acceptor end of tRNA(Glu). The polypeptide is Glutamate--tRNA ligase (Christiangramia forsetii (strain DSM 17595 / CGMCC 1.15422 / KT0803) (Gramella forsetii)).